A 184-amino-acid polypeptide reads, in one-letter code: ATP synthase subunit b, chloroplastic (184 aa).

A helical membrane pass occupies residues 27-49 (LATNPINLSVVLGVLIFFGKGVL).

It belongs to the ATPase B chain family. As to quaternary structure, F-type ATPases have 2 components, F(1) - the catalytic core - and F(0) - the membrane proton channel. F(1) has five subunits: alpha(3), beta(3), gamma(1), delta(1), epsilon(1). F(0) has four main subunits: a(1), b(1), b'(1) and c(10-14). The alpha and beta chains form an alternating ring which encloses part of the gamma chain. F(1) is attached to F(0) by a central stalk formed by the gamma and epsilon chains, while a peripheral stalk is formed by the delta, b and b' chains.

The protein localises to the plastid. The protein resides in the chloroplast thylakoid membrane. In terms of biological role, f(1)F(0) ATP synthase produces ATP from ADP in the presence of a proton or sodium gradient. F-type ATPases consist of two structural domains, F(1) containing the extramembraneous catalytic core and F(0) containing the membrane proton channel, linked together by a central stalk and a peripheral stalk. During catalysis, ATP synthesis in the catalytic domain of F(1) is coupled via a rotary mechanism of the central stalk subunits to proton translocation. Its function is as follows. Component of the F(0) channel, it forms part of the peripheral stalk, linking F(1) to F(0). The protein is ATP synthase subunit b, chloroplastic of Eucalyptus globulus subsp. globulus (Tasmanian blue gum).